The primary structure comprises 419 residues: Coiled-coil domain-containing protein 85C (419 aa).

Position 2 is an N-acetylalanine (alanine 2). Coiled-coil stretches lie at residues 22-88 (ELLR…RELC) and 118-159 (HEVA…AALA). Disordered stretches follow at residues 162-268 (GAAS…DPSS) and 307-348 (HSES…AGQK). The span at 164 to 175 (ASGGGGGGGGAG) shows a compositional bias: gly residues. A compositionally biased stretch (low complexity) spans 176–189 (SRSSIDSQASLSGP). Serine 178 is modified (phosphoserine). Over residues 224–233 (PPPLLPPGPH) the composition is skewed to pro residues. Serine 246 bears the Phosphoserine mark. A compositionally biased stretch (polar residues) spans 307–325 (HSESQLASLPPSYQDSLQN). The segment covering 329–338 (CPAPELPSPP) has biased composition (pro residues).

Belongs to the CCDC85 family. As to quaternary structure, may interact with ARVCF, CTNND1, CTNND2 and PKP4.

It localises to the cell junction. It is found in the tight junction. The protein resides in the adherens junction. May play a role in cell-cell adhesion and epithelium development through its interaction with proteins of the beta-catenin family. May play an important role in cortical development, especially in the maintenance of radial glia. The chain is Coiled-coil domain-containing protein 85C (CCDC85C) from Homo sapiens (Human).